Reading from the N-terminus, the 476-residue chain is MAPQLAGSSHSSSASDQAHRQSSDPALESGSDTHVGSIAPKTETDFLVSFTGDDDPRSPKHMSSARKWLIVAIVSSTRLGLSPMILAPLSEFYGRKPVYVVSMFFFVVWIIPCAVARNIETLIVARFFNGFAGAAFLSVAGGTVGDLFPKNKLQAPMMVYTASPFLGPELGPVIGNFINSYLDWRWSFYILLIWAFAQWVSISLLVPETYHPVLLRREAQRLRKETGDDRYYAPIEKMDRSIAQTIIRSCYRPFLLLTLEPMCLLLCLFCSVLLGVLYLFFGAFSLVFKDNHGFNLWQVGLSFLGITVGMIIGISTNPFWHRNFMRLLQNHEAKTGTVGSSEPEFRLPPAVGGAPLVTIGLLWFAWTTYPSVHWIVPIIGSGIFGAGVIMIFSGVFTFLVDAYPLYAASALAANSFSRSMFAAAFPLFGQAMFRNLGYQWAGFLLAMITLLLAPFPYIFYRWGAKIRQHSRYAGAK.

Residues 1–38 (MAPQLAGSSHSSSASDQAHRQSSDPALESGSDTHVGSI) are disordered. Transmembrane regions (helical) follow at residues 69–89 (LIVA…LAPL), 96–116 (KPVY…CAVA), 127–147 (FFNG…VGDL), 186–206 (WSFY…SLLV), 264–284 (LLLC…FGAF), 294–314 (FNLW…IIGI), 347–367 (LPPA…FAWT), 372–392 (VHWI…IMIF), 403–425 (YPLY…AAAF), and 440–460 (WAGF…YIFY).

This sequence belongs to the major facilitator superfamily.

The protein resides in the cell membrane. In terms of biological role, efflux pump that might be required for efficient secretion of terreic acid. In Aspergillus terreus (strain NIH 2624 / FGSC A1156), this protein is Efflux pump atB.